Reading from the N-terminus, the 230-residue chain is MAASQRPSWSESKVAGVVQEGNREAPQDIKMALYKHGQLIPSLGDAKFRSPIISEIIEKKFEHYRNDKTLNIHGTLVFGTSSSLSGIMANLVFRNSFKVKYEALKTYASLTTLPVLATIVSYKLFVTDALQSGDISKESCVLRSALIGMACGVSYPSALAFYKNGRLAVKYQTVPLPPKGRVMLHWLLLCQTGMKAMAIPLFFQIVMGAFTGLHHYNICEKPRARLVPDD.

4 helical membrane passes run 70–92 (LNIH…ANLV), 107–126 (YASL…KLFV), 139–161 (SCVL…ALAF), and 196–218 (AMAI…HYNI).

Belongs to the TMEM126 family. As to quaternary structure, part of the mitochondrial complex I assembly/MCIA complex that comprises at least the core subunits TMEM126B, NDUFAF1, ECSIT and ACAD9 and complement subunits such as COA1 and TMEM186. Associates with the intermediate 370 kDa subcomplex of incompletely assembled complex I. Interacts with TMEM70.

Its subcellular location is the mitochondrion membrane. Its function is as follows. As part of the MCIA complex, involved in the assembly of the mitochondrial complex I. Participates in constructing the membrane arm of complex I. In Mus musculus (Mouse), this protein is Complex I assembly factor TMEM126B, mitochondrial.